A 280-amino-acid polypeptide reads, in one-letter code: uncharacterized protein (280 aa).

Residues 1–35 (MQGQVLKKVLKKYVHIGMCTLFLHAILLFPCVAQA) form the signal peptide.

This is an uncharacterized protein from Treponema pallidum (strain Nichols).